The sequence spans 224 residues: Putative adhesin A1E_05320 (224 aa).

Residues 1 to 22 (MKKLLLIAATSATMLSSTLSFA) form the signal peptide.

The chain is Putative adhesin A1E_05320 from Rickettsia canadensis (strain McKiel).